A 458-amino-acid polypeptide reads, in one-letter code: Ammonium transporter Rh type B (458 aa).

At 1 to 13 (MAGSPSRAAGRRL) the chain is on the cytoplasmic side. Residues 14-34 (QLPLLCLFLQGATAVLFAVFV) traverse the membrane as a helical segment. The Extracellular portion of the chain corresponds to 35–61 (RYNHKTDAALWHRSNHSNADNEFYFRY). The N-linked (GlcNAc...) asparagine glycan is linked to Asn-49. Residues 62 to 82 (PSFQDVHAMVFVGFGFLMVFL) traverse the membrane as a helical segment. Residues 83-86 (QRYG) are Cytoplasmic-facing. The chain crosses the membrane as a helical span at residues 87–107 (FSSVGFTFLLAAFALQWSTLV). Residues 108–124 (QGFLHSFHGGHIHVGVE) lie on the Extracellular side of the membrane. The chain crosses the membrane as a helical span at residues 125-145 (SMINADFCAGAVLISFGAVLG). The Cytoplasmic segment spans residues 146 to 149 (KTGP). The helical transmembrane segment at 150–170 (TQLLLMALLEVVLFGINEFVL) threads the bilayer. The Extracellular segment spans residues 171–178 (LHLLGVRD). The chain crosses the membrane as a helical span at residues 179–201 (AGGSMTIHTFGAYFGLVLSRVLY). Residues 202–219 (RPQLEKSKHRQGSVYHSD) lie on the Cytoplasmic side of the membrane. Residues 220–240 (LFAMIGTIFLWIFWPSFNAAL) form a helical membrane-spanning segment. Topologically, residues 241–251 (TALGAGQHRTA) are extracellular. The chain crosses the membrane as a helical span at residues 252–272 (LNTYYSLAASTLGTFALSALV). Residues 273-282 (GEDGRLDMVH) are Cytoplasmic-facing. Residues 283 to 303 (IQNAALAGGVVVGTSSEMMLT) traverse the membrane as a helical segment. Residue Pro-304 is a topological domain, extracellular. A helical membrane pass occupies residues 305 to 325 (FGALAAGFLAGTVSTLGYKFF). Residues 326 to 346 (TPILESKFKVQDTCGVHNLHG) are Cytoplasmic-facing. A helical transmembrane segment spans residues 347–367 (MPGVLGALLGVLVAGLATHEA). Residues 368-393 (YGDGLESVFPLIAEGQRSATSQAMHQ) lie on the Extracellular side of the membrane. Residues 394-414 (LFGLFVTLMFASVGGGLGGLL) form a helical membrane-spanning segment. Topologically, residues 415–458 (LKLPFLDSPPDSQHYEDQVHWQVPGEHEDKAQRPLRVEEADTQA) are cytoplasmic. The interaction with ANK3 stretch occupies residues 416 to 424 (KLPFLDSPP). The disordered stretch occupies residues 436 to 458 (QVPGEHEDKAQRPLRVEEADTQA).

It belongs to the ammonium transporter (TC 2.A.49) family. Rh subfamily. As to quaternary structure, interacts (via C-terminus) with ANK2 and ANK3; required for targeting to the basolateral membrane. In terms of processing, N-glycosylated. In terms of tissue distribution, specifically expressed in kidney. Also detected in liver and ovary.

The protein resides in the cell membrane. The protein localises to the basolateral cell membrane. The catalysed reaction is NH4(+)(in) = NH4(+)(out). The enzyme catalyses methylamine(out) = methylamine(in). It catalyses the reaction CO2(out) = CO2(in). Ammonium transporter involved in the maintenance of acid-base homeostasis. Transports ammonium and its related derivative methylammonium across the basolateral plasma membrane of epithelial cells likely contributing to renal transepithelial ammonia transport and ammonia metabolism. May transport either NH4(+) or NH3 ammonia species predominantly mediating an electrogenic NH4(+) transport. May act as a CO2 channel providing for renal acid secretion. This Homo sapiens (Human) protein is Ammonium transporter Rh type B.